The following is a 543-amino-acid chain: Glucose-6-phosphate isomerase (543 aa).

Catalysis depends on glutamate 353, which acts as the Proton donor. Residues histidine 384 and lysine 504 contribute to the active site.

This sequence belongs to the GPI family.

The protein localises to the cytoplasm. It catalyses the reaction alpha-D-glucose 6-phosphate = beta-D-fructose 6-phosphate. It participates in carbohydrate biosynthesis; gluconeogenesis. The protein operates within carbohydrate degradation; glycolysis; D-glyceraldehyde 3-phosphate and glycerone phosphate from D-glucose: step 2/4. Catalyzes the reversible isomerization of glucose-6-phosphate to fructose-6-phosphate. This Roseiflexus castenholzii (strain DSM 13941 / HLO8) protein is Glucose-6-phosphate isomerase.